The primary structure comprises 214 residues: Sugar fermentation stimulation protein homolog (214 aa).

It belongs to the SfsA family.

The polypeptide is Sugar fermentation stimulation protein homolog (Aquifex aeolicus (strain VF5)).